Consider the following 793-residue polypeptide: Toll-like receptor 6 (793 aa).

The N-terminal stretch at 1–23 is a signal peptide; that stretch reads MIKDKESPIRSCHFVYIVALVFG. Topologically, residues 24-584 are extracellular; that stretch reads TIIQFSDESE…FQVSELSCNT (561 aa). LRR repeat units lie at residues 54 to 77, 78 to 101, 102 to 122, 123 to 147, 148 to 168, 169 to 196, 197 to 219, 220 to 250, 251 to 277, 278 to 303, 304 to 330, 331 to 354, 355 to 378, 379 to 404, 405 to 428, 429 to 449, 450 to 473, 474 to 495, and 496 to 519; these read TKVL…FLSG, LRVL…FNHD, LEYL…PITT, TLKH…GNLT, QLNF…LPIA, HLHL…ILNT, KKLH…SANS, LGCL…GGPT, LLNF…WPKP, IEYL…YKTT, LKAL…VFSE, MNIL…EPST, FKFL…TLAR, LETL…DMLS, LETL…SWVG, SIVV…RCLP, PRIK…TGLE, TLQE…GIFS, and SLSI…QSCQ. N63 carries an N-linked (GlcNAc...) asparagine glycan. A disulfide bridge connects residues C117 and C140. Residue N145 is glycosylated (N-linked (GlcNAc...) asparagine). A disulfide bridge links C235 with C265. Residues N253 and N285 are each glycosylated (N-linked (GlcNAc...) asparagine). C348 and C373 form a disulfide bridge. N359 carries N-linked (GlcNAc...) asparagine glycosylation. N-linked (GlcNAc...) asparagine glycans are attached at residues N423 and N434. The cysteines at positions 424 and 447 are disulfide-linked. The region spanning 520–575 is the LRRCT domain; sequence KIRSLKAGNNPFQCSCELRDFIQSVGQVSSDVVEGWPESYKCDYPESYKGTPLKDF. A helical transmembrane segment spans residues 585-605; sequence ALLIITIVVPGLVLAVAVTVL. The Cytoplasmic portion of the chain corresponds to 606–793; it reads CIYLDLPWYL…KLMEKAAEIH (188 aa). One can recognise a TIR domain in the interval 640-781; the sequence is LQFHAFISYS…LFWANLRASI (142 aa).

Belongs to the Toll-like receptor family. In terms of assembly, homodimer (via cytoplasmic TIR domain). Heterodimer with TLR2 via their respective extracellular domains. Binds MYD88 via their respective TIR domains. Interacts with CD36, following CD36 stimulation by oxLDL or amyloid-beta 42, and forms a heterodimer with TLR4. The trimeric complex is internalized and triggers inflammatory response. LYN kinase activity facilitates TLR4-TLR6 heterodimerization and signal initiation. The heterodimer TLR2:TLR6 interacts with CD14 and CD36 in response to triacylated lipopeptides. Highest expression levels seen in blood and lymph node, intermediate expression seen in spleen and lowest expression seen in the liver, lung and udder cistern.

It localises to the cell membrane. The protein localises to the cytoplasmic vesicle. The protein resides in the phagosome membrane. It is found in the membrane raft. Its subcellular location is the golgi apparatus. Its function is as follows. Participates in the innate immune response to Gram-positive bacteria and fungi. Specifically recognizes diacylated and, to a lesser extent, triacylated lipopeptides. In response to diacylated lipopeptides, forms the activation cluster TLR2:TLR6:CD14:CD36, this cluster triggers signaling from the cell surface and subsequently is targeted to the Golgi in a lipid-raft dependent pathway. Acts via MYD88 and TRAF6, leading to NF-kappa-B activation, cytokine secretion and the inflammatory response. Recognizes mycoplasmal macrophage-activating lipopeptide-2kD (MALP-2), soluble tuberculosis factor (STF), phenol-soluble modulin (PSM) and B.burgdorferi outer surface protein A lipoprotein (OspA-L) cooperatively with TLR2. In complex with TLR4, promotes sterile inflammation in monocytes/macrophages in response to oxidized low-density lipoprotein (oxLDL) or amyloid-beta 42. In this context, the initial signal is provided by oxLDL- or amyloid-beta 42-binding to CD36. This event induces the formation of a heterodimer of TLR4 and TLR6, which is rapidly internalized and triggers inflammatory response, leading to the NF-kappa-B-dependent production of CXCL1, CXCL2 and CCL9 cytokines, via MYD88 signaling pathway, and CCL5 cytokine, via TICAM1 signaling pathway, as well as IL1B secretion. The sequence is that of Toll-like receptor 6 from Bos taurus (Bovine).